A 371-amino-acid chain; its full sequence is Glycosyltransferase 8 domain-containing protein 1 (371 aa).

The Cytoplasmic portion of the chain corresponds to 1–7; the sequence is MSFRKVN. The chain crosses the membrane as a helical; Signal-anchor for type II membrane protein span at residues 8–28; sequence IVILVLAVALFLLVLHHNFLG. Over 29–371 the chain is Lumenal; that stretch reads LSSLLRNEVS…RRHVEISNTK (343 aa). N-linked (GlcNAc...) asparagine glycans are attached at residues Asn103 and Asn257.

This sequence belongs to the glycosyltransferase 8 family.

The protein localises to the membrane. The polypeptide is Glycosyltransferase 8 domain-containing protein 1 (GLT8D1) (Bos taurus (Bovine)).